Consider the following 505-residue polypeptide: ATP synthase subunit alpha (505 aa).

ATP is bound at residue 169 to 176; it reads GDRQIGKT.

It belongs to the ATPase alpha/beta chains family. F-type ATPases have 2 components, CF(1) - the catalytic core - and CF(0) - the membrane proton channel. CF(1) has five subunits: alpha(3), beta(3), gamma(1), delta(1), epsilon(1). CF(0) has three main subunits: a(1), b(2) and c(9-12). The alpha and beta chains form an alternating ring which encloses part of the gamma chain. CF(1) is attached to CF(0) by a central stalk formed by the gamma and epsilon chains, while a peripheral stalk is formed by the delta and b chains.

It is found in the cell inner membrane. It catalyses the reaction ATP + H2O + 4 H(+)(in) = ADP + phosphate + 5 H(+)(out). Functionally, produces ATP from ADP in the presence of a proton gradient across the membrane. The alpha chain is a regulatory subunit. This Desulfosudis oleivorans (strain DSM 6200 / JCM 39069 / Hxd3) (Desulfococcus oleovorans) protein is ATP synthase subunit alpha.